A 305-amino-acid polypeptide reads, in one-letter code: Probable L-ribulose-5-phosphate 3-epimerase UlaE (305 aa).

Belongs to the L-ribulose-5-phosphate 3-epimerase family.

It carries out the reaction L-ribulose 5-phosphate = L-xylulose 5-phosphate. It participates in cofactor degradation; L-ascorbate degradation; D-xylulose 5-phosphate from L-ascorbate: step 3/4. Catalyzes the isomerization of L-xylulose-5-phosphate to L-ribulose-5-phosphate. Is involved in the anaerobic L-ascorbate utilization. This Mycoplasma pneumoniae (strain ATCC 29342 / M129 / Subtype 1) (Mycoplasmoides pneumoniae) protein is Probable L-ribulose-5-phosphate 3-epimerase UlaE (ulaE).